The chain runs to 573 residues: DNA ligase (573 aa).

Residue Glu-250 coordinates ATP. Lys-252 serves as the catalytic N6-AMP-lysine intermediate. ATP contacts are provided by Arg-257, Arg-272, Glu-301, Phe-342, Arg-432, and Lys-438.

It belongs to the ATP-dependent DNA ligase family. It depends on Mg(2+) as a cofactor.

The catalysed reaction is ATP + (deoxyribonucleotide)n-3'-hydroxyl + 5'-phospho-(deoxyribonucleotide)m = (deoxyribonucleotide)n+m + AMP + diphosphate.. Its function is as follows. DNA ligase that seals nicks in double-stranded DNA during DNA replication, DNA recombination and DNA repair. In Methanococcus maripaludis (strain C6 / ATCC BAA-1332), this protein is DNA ligase.